Consider the following 231-residue polypeptide: Phosphoribosylformylglycinamidine synthase subunit PurQ (231 aa).

Residues 7 to 231 (GVVVFPGSNC…RLFASLFRQL (225 aa)) form the Glutamine amidotransferase type-1 domain. The active-site Nucleophile is the Cys-89. Residues His-206 and Glu-208 contribute to the active site.

Part of the FGAM synthase complex composed of 1 PurL, 1 PurQ and 2 PurS subunits.

It localises to the cytoplasm. It catalyses the reaction N(2)-formyl-N(1)-(5-phospho-beta-D-ribosyl)glycinamide + L-glutamine + ATP + H2O = 2-formamido-N(1)-(5-O-phospho-beta-D-ribosyl)acetamidine + L-glutamate + ADP + phosphate + H(+). It carries out the reaction L-glutamine + H2O = L-glutamate + NH4(+). The protein operates within purine metabolism; IMP biosynthesis via de novo pathway; 5-amino-1-(5-phospho-D-ribosyl)imidazole from N(2)-formyl-N(1)-(5-phospho-D-ribosyl)glycinamide: step 1/2. Functionally, part of the phosphoribosylformylglycinamidine synthase complex involved in the purines biosynthetic pathway. Catalyzes the ATP-dependent conversion of formylglycinamide ribonucleotide (FGAR) and glutamine to yield formylglycinamidine ribonucleotide (FGAM) and glutamate. The FGAM synthase complex is composed of three subunits. PurQ produces an ammonia molecule by converting glutamine to glutamate. PurL transfers the ammonia molecule to FGAR to form FGAM in an ATP-dependent manner. PurS interacts with PurQ and PurL and is thought to assist in the transfer of the ammonia molecule from PurQ to PurL. The chain is Phosphoribosylformylglycinamidine synthase subunit PurQ from Chlorobium luteolum (strain DSM 273 / BCRC 81028 / 2530) (Pelodictyon luteolum).